Consider the following 257-residue polypeptide: Pyridoxine/pyridoxamine 5'-phosphate oxidase (257 aa).

33–36 (RIKY) contacts substrate. 90 to 93 (RFVL) contacts FMN. Pyridoxal 5'-phosphate is bound at residue Lys95. Residues 105–106 (YT) and Lys112 each bind FMN. Pyridoxal 5'-phosphate-binding residues include Tyr152, Arg156, and Ser160. FMN-binding positions include 169-170 (QS) and Trp216. 222 to 224 (RLH) serves as a coordination point for substrate. Arg226 is an FMN binding site.

Belongs to the pyridoxamine 5'-phosphate oxidase family. As to quaternary structure, homodimer. Requires FMN as cofactor. As to expression, expressed in silk gland and fat body of the larva.

The catalysed reaction is pyridoxamine 5'-phosphate + O2 + H2O = pyridoxal 5'-phosphate + H2O2 + NH4(+). The enzyme catalyses pyridoxine 5'-phosphate + O2 = pyridoxal 5'-phosphate + H2O2. The protein operates within cofactor metabolism; pyridoxal 5'-phosphate salvage; pyridoxal 5'-phosphate from pyridoxamine 5'-phosphate: step 1/1. It participates in cofactor metabolism; pyridoxal 5'-phosphate salvage; pyridoxal 5'-phosphate from pyridoxine 5'-phosphate: step 1/1. Its function is as follows. Catalyzes the oxidation of either pyridoxine 5'-phosphate (PNP) or pyridoxamine 5'-phosphate (PMP) into pyridoxal 5'-phosphate (PLP). The polypeptide is Pyridoxine/pyridoxamine 5'-phosphate oxidase (Bombyx mori (Silk moth)).